A 494-amino-acid chain; its full sequence is Vacuolar-processing enzyme (494 aa).

Positions 1–20 (MTRLASGVLITLLVALAGIA) are cleaved as a signal peptide. N151 is a glycosylation site (N-linked (GlcNAc...) asparagine). Residue H178 is part of the active site. The Nucleophile role is filled by C220. A disulfide bridge connects residues C253 and C267. Residue N336 is glycosylated (N-linked (GlcNAc...) asparagine). Intrachain disulfides connect C430/C460 and C442/C477.

Belongs to the peptidase C13 family. High levels are seen in the flowers, a lower level expression is seen in the leaves, while very low levels are seen in the stems and roots.

Asparagine-specific endopeptidase that may be involved in processing of proteins targeted to vacuoles that accumulate during ethylene-regulated processes such as flower opening and flavedo degreening. In Citrus sinensis (Sweet orange), this protein is Vacuolar-processing enzyme.